Consider the following 412-residue polypeptide: Alanyl-tRNA editing protein Aarsd1 (412 aa).

The Zn(2+) site is built by His108, His112, Cys208, and His212.

This sequence belongs to the class-II aminoacyl-tRNA synthetase family. Alax-L subfamily. Zn(2+) is required as a cofactor.

It is found in the cytoplasm. In terms of biological role, functions in trans to edit the amino acid moiety from incorrectly charged tRNA(Ala). This chain is Alanyl-tRNA editing protein Aarsd1 (aarsd1), found in Danio rerio (Zebrafish).